The primary structure comprises 314 residues: Acetyl-coenzyme A carboxylase carboxyl transferase subunit alpha (314 aa).

A CoA carboxyltransferase C-terminal domain is found at 32–289; the sequence is EIDMLEASLK…KKMFLKHLNE (258 aa).

It belongs to the AccA family. In terms of assembly, acetyl-CoA carboxylase is a heterohexamer composed of biotin carboxyl carrier protein (AccB), biotin carboxylase (AccC) and two subunits each of ACCase subunit alpha (AccA) and ACCase subunit beta (AccD).

Its subcellular location is the cytoplasm. It catalyses the reaction N(6)-carboxybiotinyl-L-lysyl-[protein] + acetyl-CoA = N(6)-biotinyl-L-lysyl-[protein] + malonyl-CoA. The protein operates within lipid metabolism; malonyl-CoA biosynthesis; malonyl-CoA from acetyl-CoA: step 1/1. In terms of biological role, component of the acetyl coenzyme A carboxylase (ACC) complex. First, biotin carboxylase catalyzes the carboxylation of biotin on its carrier protein (BCCP) and then the CO(2) group is transferred by the carboxyltransferase to acetyl-CoA to form malonyl-CoA. This chain is Acetyl-coenzyme A carboxylase carboxyl transferase subunit alpha, found in Staphylococcus epidermidis (strain ATCC 12228 / FDA PCI 1200).